Reading from the N-terminus, the 327-residue chain is DNA repair protein XRCC4 (327 aa).

Residues 1 to 211 are interaction with IFFO1; it reads MERKVSRISL…QLEKNLKPER (211 aa). Ser53 carries the post-translational modification Phosphoserine. Coiled coils occupy residues 133–153 and 183–213; these read IAEKQAKNEHLQKENDRLLRD and LNEKKTKIRSLHKLLDEIQQLEKNLKPERET. Interaction with LIG4 regions lie at residues 179-210 and 179-211; these read FILVLNEKKTKIRSLHKLLDEIQQLEKNLKPE and FILVLNEKKTKIRSLHKLLDEIQQLEKNLKPER. At Ser192 the chain carries Phosphoserine. Lys208 is covalently cross-linked (Glycyl lysine isopeptide (Lys-Gly) (interchain with G-Cter in SUMO)). Tyr226 carries the phosphotyrosine modification. Ser229 carries the post-translational modification Phosphoserine. Thr230 bears the Phosphothreonine mark. 2 positions are modified to phosphoserine: Ser249 and Ser253. The interval 255-327 is disordered; the sequence is DVTDIAPSRK…RNSSPEDIFD (73 aa). The short motif at 263 to 268 is the Nuclear localization signal element; the sequence is RKRRHH. Residue Lys289 forms a Glycyl lysine isopeptide (Lys-Gly) (interchain with G-Cter in ubiquitin) linkage. 4 positions are modified to phosphoserine: Ser294, Ser295, Ser308, and Ser313. Residues 308-327 show a composition bias toward polar residues; sequence SAGNMSLETLRNSSPEDIFD. Thr316 bears the Phosphothreonine mark. 2 positions are modified to phosphoserine: Ser320 and Ser321.

This sequence belongs to the XRCC4-XLF family. XRCC4 subfamily. Homodimer and homotetramer in solution. Interacts with NHEJ1/XLF; the interaction is direct and is mediated via a head-to-head interaction between N-terminal head regions. Interacts with LIG4; the LIG4-XRCC4 subcomplex has a 1:2 stoichiometry and XRCC4 is required for LIG4 stability. Component of the core long-range non-homologous end joining (NHEJ) complex (also named DNA-PK complex) composed of PRKDC, LIG4, XRCC4, XRCC6/Ku70, XRCC5/Ku86 and NHEJ1/XLF. Additional component of the NHEJ complex includes PAXX. Following autophosphorylation, PRKDC dissociates from DNA, leading to formation of the short-range NHEJ complex, composed of LIG4, XRCC4, XRCC6/Ku70, XRCC5/Ku86 and NHEJ1/XLF. Interacts with PRKDC; the interaction is direct. Interacts with XRCC6/Ku70; the interaction is direct. Interacts with APTX and APLF. Forms a heterotetramer with IFFO1; the interaction involves LIG4-free XRCC4 and leads to the relocalization of IFFO1 to the sites of DNA damage. Interacts with PNKP; mainly interacts with PNKP when phosphorylated at Thr-230, but is also able to interact at much lower level with PNKP when not unphosphorylated. Interacts with POLL (DNA polymerase lambda). In terms of assembly, interacts with XKR4; interacts with the processed form of XKR4, which is cleaved by caspase. Phosphorylated by PRKDC at the C-terminus in response to DNA damage; Ser-253 constitutes the main phosphorylation sites. Phosphorylations by PRKDC at the C-terminus of XRCC4 and NHEJ1/XLF are highly redundant and regulate ability of the XRCC4-NHEJ1/XLF subcomplex to bridge DNA. Phosphorylation by PRKDC does not prevent interaction with NHEJ1/XLF but disrupts ability to bridge DNA and promotes detachment from DNA. Phosphorylation at Ser-320 and Ser-321 by PRKDC promotes recognition by the SCF(FBXW7) complex and subsequent ubiquitination via 'Lys-63'-linked ubiquitin. Phosphorylation at Thr-230 by CK2 promotes interaction with PNKP; regulating PNKP activity and localization to DNA damage sites. Phosphorylation by CK2 promotes interaction with APTX. In terms of processing, ubiquitinated at Lys-289 by the SCF(FBXW7) complex via 'Lys-63'-linked ubiquitination, thereby promoting double-strand break repair: the SCF(FBXW7) complex specifically recognizes XRCC4 when phosphorylated at Ser-320 and Ser-321 by PRKDC, and 'Lys-63'-linked ubiquitination facilitates DNA non-homologous end joining (NHEJ) by enhancing association with XRCC5/Ku80 and XRCC6/Ku70. Monoubiquitinated. Post-translationally, undergoes proteolytic processing by caspase-3 (CASP3). This generates the protein XRCC4, C-terminus (XRCC4/C), which translocates to the cytoplasm and activates phospholipid scramblase activity of XKR4, thereby promoting phosphatidylserine exposure on apoptotic cell surface.

Its subcellular location is the nucleus. The protein resides in the chromosome. It localises to the cytoplasm. In terms of biological role, DNA non-homologous end joining (NHEJ) core factor, required for double-strand break repair and V(D)J recombination. Acts as a scaffold protein that regulates recruitment of other proteins to DNA double-strand breaks (DSBs). Associates with NHEJ1/XLF to form alternating helical filaments that bridge DNA and act like a bandage, holding together the broken DNA until it is repaired. The XRCC4-NHEJ1/XLF subcomplex binds to the DNA fragments of a DSB in a highly diffusive manner and robustly bridges two independent DNA molecules, holding the broken DNA fragments in close proximity to one other. The mobility of the bridges ensures that the ends remain accessible for further processing by other repair factors. Plays a key role in the NHEJ ligation step of the broken DNA during DSB repair via direct interaction with DNA ligase IV (LIG4): the LIG4-XRCC4 subcomplex reseals the DNA breaks after the gap filling is completed. XRCC4 stabilizes LIG4, regulates its subcellular localization and enhances LIG4's joining activity. Binding of the LIG4-XRCC4 subcomplex to DNA ends is dependent on the assembly of the DNA-dependent protein kinase complex DNA-PK to these DNA ends. Promotes displacement of PNKP from processed strand break termini. Acts as an activator of the phospholipid scramblase activity of XKR4. This form, which is generated upon caspase-3 (CASP3) cleavage, translocates into the cytoplasm and interacts with XKR4, thereby promoting phosphatidylserine scramblase activity of XKR4 and leading to phosphatidylserine exposure on apoptotic cell surface. The chain is DNA repair protein XRCC4 from Cricetulus griseus (Chinese hamster).